The following is a 257-amino-acid chain: Acetylglutamate kinase (257 aa).

Residues 40–41 (GG), arginine 62, and asparagine 155 contribute to the substrate site.

Belongs to the acetylglutamate kinase family. ArgB subfamily.

The protein resides in the cytoplasm. The enzyme catalyses N-acetyl-L-glutamate + ATP = N-acetyl-L-glutamyl 5-phosphate + ADP. It functions in the pathway amino-acid biosynthesis; L-arginine biosynthesis; N(2)-acetyl-L-ornithine from L-glutamate: step 2/4. Its function is as follows. Catalyzes the ATP-dependent phosphorylation of N-acetyl-L-glutamate. The chain is Acetylglutamate kinase from Shouchella clausii (strain KSM-K16) (Alkalihalobacillus clausii).